Here is a 75-residue protein sequence, read N- to C-terminus: Cytochrome c oxidase assembly factor 5 (75 aa).

The 39-residue stretch at 28–66 (QHDCVVKEGKKPSECLKEGHCRSMQVAFFECKRSMLDTR) folds into the CHCH domain. Positions 31–42 (CVVKEGKKPSEC) match the Cx10C motif motif. 2 disulfides stabilise this stretch: cysteine 31/cysteine 58 and cysteine 42/cysteine 48. Positions 48–58 (CRSMQVAFFEC) match the Cx9C motif motif.

Belongs to the PET191 family.

Functionally, involved in an early step of the mitochondrial complex IV assembly process. This Danio rerio (Zebrafish) protein is Cytochrome c oxidase assembly factor 5 (coa5).